We begin with the raw amino-acid sequence, 335 residues long: MSSEVLPASIEPPNVEGKPGASDSEEERQKQRVDAEAQPISKRQLKKLMKQRLWEEQREQRKEKRKEKRKRKKLERRCQLESNSDGNDRKRIRRHVAPSNLRLIIDCSFDDLMVLKDIKKLHKQIQRCYAENRRASHPVQFYLTSHGGQLKKNMDENDQGWVNWKDIHIKSEHYSELIKKEDLVYLTSDSPNVLKDLDESKAYVIGGLVDHNHHKGLTFKQASSYGIKHAQLPLAEFVKMNSRKVLAVNHVFEIILEFLETGDWQEAFFTILPPRKGAVPAHKACESSPQDHQALPGGWDSAIEGEHGRDDPGSPHKEQQGQQSSSVSAVSPDPQ.

2 disordered regions span residues 1–91 (MSSE…DRKR) and 279–335 (VPAH…PDPQ). Phosphoserine occurs at positions 22 and 24. The span at 52-62 (RLWEEQREQRK) shows a compositional bias: basic and acidic residues. Positions 52 to 84 (RLWEEQREQRKEKRKEKRKRKKLERRCQLESNS) form a coiled coil. A compositionally biased stretch (basic residues) spans 63–75 (EKRKEKRKRKKLE). Residues 88 to 279 (DRKRIRRHVA…TILPPRKGAV (192 aa)) form the SAM-dependent MTase TRM10-type domain. A compositionally biased stretch (basic and acidic residues) spans 304-319 (EGEHGRDDPGSPHKEQ). Residues 320 to 335 (QGQQSSSVSAVSPDPQ) are compositionally biased toward low complexity. Serine 331 carries the post-translational modification Phosphoserine.

The protein belongs to the class IV-like SAM-binding methyltransferase superfamily. TRM10 family. In terms of assembly, interacts with tRNA. In terms of tissue distribution, ubiquitously expressed. Is more abundant in brain and pancreatic islets compared to other tissues (at protein level).

The protein localises to the nucleus. Its subcellular location is the nucleolus. It catalyses the reaction guanosine(9) in tRNA + S-adenosyl-L-methionine = N(1)-methylguanosine(9) in tRNA + S-adenosyl-L-homocysteine + H(+). In terms of biological role, S-adenosyl-L-methionine-dependent guanine N(1)-methyltransferase that catalyzes the formation of N(1)-methylguanine at position 9 (m1G9) in tRNAs. Probably not able to catalyze formation of N(1)-methyladenine at position 9 (m1A9) in tRNAs. The polypeptide is tRNA methyltransferase 10 homolog A (Trmt10a) (Rattus norvegicus (Rat)).